A 152-amino-acid chain; its full sequence is D-aminoacyl-tRNA deacylase (152 aa).

Residues 142–143 (GP) carry the Gly-cisPro motif, important for rejection of L-amino acids motif.

The protein belongs to the DTD family. Homodimer.

It localises to the cytoplasm. The catalysed reaction is glycyl-tRNA(Ala) + H2O = tRNA(Ala) + glycine + H(+). It catalyses the reaction a D-aminoacyl-tRNA + H2O = a tRNA + a D-alpha-amino acid + H(+). Its function is as follows. An aminoacyl-tRNA editing enzyme that deacylates mischarged D-aminoacyl-tRNAs. Also deacylates mischarged glycyl-tRNA(Ala), protecting cells against glycine mischarging by AlaRS. Acts via tRNA-based rather than protein-based catalysis; rejects L-amino acids rather than detecting D-amino acids in the active site. By recycling D-aminoacyl-tRNA to D-amino acids and free tRNA molecules, this enzyme counteracts the toxicity associated with the formation of D-aminoacyl-tRNA entities in vivo and helps enforce protein L-homochirality. The protein is D-aminoacyl-tRNA deacylase of Burkholderia vietnamiensis (strain G4 / LMG 22486) (Burkholderia cepacia (strain R1808)).